Here is a 618-residue protein sequence, read N- to C-terminus: MPHYRSRTSTHGRNMAGARALWRATGMKDGDFGKPIIAVVNSFTQFVPGHVHLKDLGALVASQIEAAGGVAKEFNTIAVDDGIAMGHGGMLYSLPSRELIADSVEYMVNAHCADAMVCISNCDKITPGMLMAAMRLNIPVVFVSGGPMEAGKVVSPTDGKVIKLDLVDAMIKAADPNVSDAEAEQVERSACPTCGSCSGMFTANSMNCLTEAIGLALPGNGTIVATHAWRRGLFEQAGRLVVDLCRRYYEQDDASVLPRSIATKAAFENAMSLDVAMGGSTNTVLHLLAAAQEAGVDFTMADIDRISRKVPCLCKAAPATDKYHIEDVHRAGGILGILGELGRANLLDLSCGNVHSGTLGQAIAQWDVAGGAGEAAQTFYRAAPGGVPTTVAFSQDKTFLTLDLDRKAGCIRSKEHAYSQDGGLAVLYGNLAEKGCIVKTAGVDESQWVFTGRARVFESQEDAVEGILGDKVEAGDVVIIRYEGPKGGPGMQEMLYPTSYLKSKGLGKTCALFTDGRFSGGSSGLVIGHASPEAAEGGAIGLVEDGDVIEIDIPKRRMHLAVDDAELARRRAAMDARGDKAWQPLDRERVVSLALQAYAALATSADRGAVRDLSQIKR.

Aspartate 81 provides a ligand contact to Mg(2+). Cysteine 122 serves as a coordination point for [2Fe-2S] cluster. Mg(2+) is bound by residues aspartate 123 and lysine 124. Lysine 124 is subject to N6-carboxylysine. Cysteine 197 serves as a coordination point for [2Fe-2S] cluster. Mg(2+) is bound at residue glutamate 493. The Proton acceptor role is filled by serine 519.

The protein belongs to the IlvD/Edd family. As to quaternary structure, homodimer. [2Fe-2S] cluster serves as cofactor. The cofactor is Mg(2+).

The catalysed reaction is (2R)-2,3-dihydroxy-3-methylbutanoate = 3-methyl-2-oxobutanoate + H2O. The enzyme catalyses (2R,3R)-2,3-dihydroxy-3-methylpentanoate = (S)-3-methyl-2-oxopentanoate + H2O. The protein operates within amino-acid biosynthesis; L-isoleucine biosynthesis; L-isoleucine from 2-oxobutanoate: step 3/4. It participates in amino-acid biosynthesis; L-valine biosynthesis; L-valine from pyruvate: step 3/4. Functionally, functions in the biosynthesis of branched-chain amino acids. Catalyzes the dehydration of (2R,3R)-2,3-dihydroxy-3-methylpentanoate (2,3-dihydroxy-3-methylvalerate) into 2-oxo-3-methylpentanoate (2-oxo-3-methylvalerate) and of (2R)-2,3-dihydroxy-3-methylbutanoate (2,3-dihydroxyisovalerate) into 2-oxo-3-methylbutanoate (2-oxoisovalerate), the penultimate precursor to L-isoleucine and L-valine, respectively. The polypeptide is Dihydroxy-acid dehydratase (Bordetella avium (strain 197N)).